Here is a 463-residue protein sequence, read N- to C-terminus: Glutathione amide reductase (463 aa).

Ni(2+) is bound by residues T2, Q3, and H4. Residues 14 to 15 (SG), E34, and T41 contribute to the FAD site. C42 and C47 are joined by a disulfide. Residues K50 and 113 to 114 (HA) each bind FAD. Position 50 (K50) interacts with NAD(+). Residues 174 to 180 (AGYIGIE), 197 to 198 (LE), V230, and G261 contribute to the NAD(+) site. FAD-binding positions include D302 and 308 to 310 (QLT). NAD(+) contacts are provided by Q308 and V341. H437 lines the FAD pocket. Catalysis depends on H437, which acts as the Proton acceptor.

This sequence belongs to the class-I pyridine nucleotide-disulfide oxidoreductase family. Homodimer. It depends on FAD as a cofactor.

It catalyses the reaction 2 glutathione amide + NAD(+) = glutathione amide disulfide + NADH + H(+). In terms of biological role, catalyzes the reduction of glutathione amide disulfide (GASSAG) to restore glutathione amide (GASH) in the presence of NADH. May play a role in GASH metabolism under anaerobic conditions as a sulfide carrier necessary for cytoplasmic sulfide oxidation. The sequence is that of Glutathione amide reductase from Marichromatium gracile (Chromatium gracile).